Here is a 387-residue protein sequence, read N- to C-terminus: Queuine tRNA-ribosyltransferase (387 aa).

Residue Asp105 is the Proton acceptor of the active site. Residues Asp105 to Phe109, Asp177, and Gly248 contribute to the substrate site. The segment at Gly278–Ser284 is RNA binding. Asp297 functions as the Nucleophile in the catalytic mechanism. An RNA binding; important for wobble base 34 recognition region spans residues Thr302–Arg306. 4 residues coordinate Zn(2+): Cys335, Cys337, Cys340, and His366.

Belongs to the queuine tRNA-ribosyltransferase family. As to quaternary structure, homodimer. Within each dimer, one monomer is responsible for RNA recognition and catalysis, while the other monomer binds to the replacement base PreQ1. Requires Zn(2+) as cofactor.

It catalyses the reaction 7-aminomethyl-7-carbaguanine + guanosine(34) in tRNA = 7-aminomethyl-7-carbaguanosine(34) in tRNA + guanine. The protein operates within tRNA modification; tRNA-queuosine biosynthesis. In terms of biological role, catalyzes the base-exchange of a guanine (G) residue with the queuine precursor 7-aminomethyl-7-deazaguanine (PreQ1) at position 34 (anticodon wobble position) in tRNAs with GU(N) anticodons (tRNA-Asp, -Asn, -His and -Tyr). Catalysis occurs through a double-displacement mechanism. The nucleophile active site attacks the C1' of nucleotide 34 to detach the guanine base from the RNA, forming a covalent enzyme-RNA intermediate. The proton acceptor active site deprotonates the incoming PreQ1, allowing a nucleophilic attack on the C1' of the ribose to form the product. After dissociation, two additional enzymatic reactions on the tRNA convert PreQ1 to queuine (Q), resulting in the hypermodified nucleoside queuosine (7-(((4,5-cis-dihydroxy-2-cyclopenten-1-yl)amino)methyl)-7-deazaguanosine). In Protochlamydia amoebophila (strain UWE25), this protein is Queuine tRNA-ribosyltransferase.